The primary structure comprises 914 residues: DENN domain-containing protein 2C (914 aa).

A disordered region spans residues Phe46–Ser98. Over residues Ser56 to Asn68 the composition is skewed to basic and acidic residues. Ser261 carries the phosphoserine modification. The tract at residues Gly411–Arg446 is disordered. In terms of domain architecture, uDENN spans Glu480–Thr627. The cDENN domain maps to Arg649 to Glu782. Residues Arg784–Val874 enclose the dDENN domain.

Functionally, guanine nucleotide exchange factor (GEF) which may activate RAB9A and RAB9B. Promotes the exchange of GDP to GTP, converting inactive GDP-bound Rab proteins into their active GTP-bound form. In Mus musculus (Mouse), this protein is DENN domain-containing protein 2C (Dennd2c).